We begin with the raw amino-acid sequence, 154 residues long: Large ribosomal subunit protein uL13 (154 aa).

The protein belongs to the universal ribosomal protein uL13 family. Part of the 50S ribosomal subunit.

Its function is as follows. This protein is one of the early assembly proteins of the 50S ribosomal subunit, although it is not seen to bind rRNA by itself. It is important during the early stages of 50S assembly. This Brucella melitensis biotype 2 (strain ATCC 23457) protein is Large ribosomal subunit protein uL13.